The chain runs to 483 residues: Serine hydroxymethyltransferase, cytosolic (483 aa).

At Lys-257 the chain carries N6-(pyridoxal phosphate)lysine.

The protein belongs to the SHMT family. As to quaternary structure, homotetramer. Identified in complex with ABRAXAS2 and the other subunits of the BRISC complex, at least composed of ABRAXAS2, BRCC3/BRCC36, BABAM2 and BABAM1/NBA1. Pyridoxal 5'-phosphate serves as cofactor.

The protein resides in the cytoplasm. It carries out the reaction (6R)-5,10-methylene-5,6,7,8-tetrahydrofolate + glycine + H2O = (6S)-5,6,7,8-tetrahydrofolate + L-serine. It participates in one-carbon metabolism; tetrahydrofolate interconversion. Functionally, interconversion of serine and glycine. This is Serine hydroxymethyltransferase, cytosolic (SHMT1) from Pongo abelii (Sumatran orangutan).